A 652-amino-acid polypeptide reads, in one-letter code: Cleavage and polyadenylation specificity factor subunit 6 (652 aa).

The tract at residues 20–85 (QAQDEFGGDG…GVYHQSSGSL (66 aa)) is disordered. Residues 93-173 (YQLYVGNLTW…QAPVVTYPSK (81 aa)) form the RRM domain. Disordered regions lie at residues 184–440 (KTRP…QQMG) and 518–652 (SYNR…RSRH). Residues 187-203 (PVPPPQQNGPPRGPAPP) are compositionally biased toward pro residues. The segment covering 205-223 (MGGGPMPTGHPGGPQGGGP) has biased composition (gly residues). Composition is skewed to pro residues over residues 256-266 (SGPPRMQPPMH), 295-307 (GPRPGPPNGPPQR), and 338-352 (PQGPPRGLPPAPGPG). The segment covering 391 to 406 (PGMNMPPQQGMNMTPQ) has biased composition (low complexity). Positions 420–435 (GPWPPPQGKPPGPFPD) are enriched in pro residues. The span at 518 to 528 (SYNRRERSRSR) shows a compositional bias: basic and acidic residues. Over residues 529–538 (ERSHRSRQRR) the composition is skewed to basic residues. A compositionally biased stretch (basic and acidic residues) spans 539–590 (ERSTSRYRERSRERERDRDRERERDGGSYRERSRSRERERQAPDHYRDDSRS). Ser-596 bears the Phosphoserine mark. The span at 598–610 (EPVVAEAAEAPSS) shows a compositional bias: low complexity. The segment covering 612-652 (RYYEDRERYRSSDRERRDRDRDRDRERERDRDRREEHRSRH) has biased composition (basic and acidic residues).

The protein belongs to the RRM CPSF6/7 family.

The protein resides in the nucleus. Its function is as follows. May play a role in pre-mRNA 3'-processing. This Drosophila melanogaster (Fruit fly) protein is Cleavage and polyadenylation specificity factor subunit 6.